A 580-amino-acid chain; its full sequence is 2-succinyl-5-enolpyruvyl-6-hydroxy-3-cyclohexene-1-carboxylate synthase (580 aa).

Belongs to the TPP enzyme family. MenD subfamily. Homodimer. Mg(2+) serves as cofactor. The cofactor is Mn(2+). It depends on thiamine diphosphate as a cofactor.

The catalysed reaction is isochorismate + 2-oxoglutarate + H(+) = 5-enolpyruvoyl-6-hydroxy-2-succinyl-cyclohex-3-ene-1-carboxylate + CO2. Its pathway is quinol/quinone metabolism; 1,4-dihydroxy-2-naphthoate biosynthesis; 1,4-dihydroxy-2-naphthoate from chorismate: step 2/7. It functions in the pathway quinol/quinone metabolism; menaquinone biosynthesis. Functionally, catalyzes the thiamine diphosphate-dependent decarboxylation of 2-oxoglutarate and the subsequent addition of the resulting succinic semialdehyde-thiamine pyrophosphate anion to isochorismate to yield 2-succinyl-5-enolpyruvyl-6-hydroxy-3-cyclohexene-1-carboxylate (SEPHCHC). The protein is 2-succinyl-5-enolpyruvyl-6-hydroxy-3-cyclohexene-1-carboxylate synthase of Listeria innocua serovar 6a (strain ATCC BAA-680 / CLIP 11262).